The following is a 66-amino-acid chain: Large ribosomal subunit protein bL32 (66 aa).

Basic residues predominate over residues 1–19; that stretch reads MAVPKRKMSRSNTRARRSQ. The segment at 1-20 is disordered; the sequence is MAVPKRKMSRSNTRARRSQW.

Belongs to the bacterial ribosomal protein bL32 family.

This chain is Large ribosomal subunit protein bL32, found in Beutenbergia cavernae (strain ATCC BAA-8 / DSM 12333 / CCUG 43141 / JCM 11478 / NBRC 16432 / NCIMB 13614 / HKI 0122).